A 485-amino-acid polypeptide reads, in one-letter code: Programmed cell death protein 7 (485 aa).

Residues 1-133 (MALPPFFGQG…EAPPPPADVL (133 aa)) are disordered. Pro residues predominate over residues 12 to 48 (PGPPPPQPPPPAPFGCPPPPLPSPAFPPPLPQRPGPF). The span at 49–71 (PGASAPFLQPPLALQPRASAEAS) shows a compositional bias: low complexity. Composition is skewed to pro residues over residues 82 to 96 (PVPPPPLPPPPPQCR) and 109 to 130 (PPPPGPGPPWSPRWPEAPPPPA). Coiled-coil stretches lie at residues 232 to 335 (VGEA…AAAR) and 362 to 411 (RSEL…ESKL).

Interacts with RBM40. Component of the U11/U12 snRNPs that are part of the U12-type spliceosome.

It localises to the nucleus. Its function is as follows. Promotes apoptosis when overexpressed. The sequence is that of Programmed cell death protein 7 (PDCD7) from Homo sapiens (Human).